The primary structure comprises 501 residues: Lysine--tRNA ligase (501 aa).

Positions 402 and 409 each coordinate Mg(2+).

Belongs to the class-II aminoacyl-tRNA synthetase family. Homodimer. Mg(2+) is required as a cofactor.

It localises to the cytoplasm. The catalysed reaction is tRNA(Lys) + L-lysine + ATP = L-lysyl-tRNA(Lys) + AMP + diphosphate. This Helicobacter pylori (strain Shi470) protein is Lysine--tRNA ligase.